Reading from the N-terminus, the 185-residue chain is dTTP/UTP pyrophosphatase (185 aa).

Asp-64 (proton acceptor) is an active-site residue.

This sequence belongs to the Maf family. YhdE subfamily. A divalent metal cation serves as cofactor.

The protein localises to the cytoplasm. The enzyme catalyses dTTP + H2O = dTMP + diphosphate + H(+). It catalyses the reaction UTP + H2O = UMP + diphosphate + H(+). In terms of biological role, nucleoside triphosphate pyrophosphatase that hydrolyzes dTTP and UTP. May have a dual role in cell division arrest and in preventing the incorporation of modified nucleotides into cellular nucleic acids. The protein is dTTP/UTP pyrophosphatase of Leptospira borgpetersenii serovar Hardjo-bovis (strain JB197).